Here is a 397-residue protein sequence, read N- to C-terminus: LL-diaminopimelate aminotransferase (397 aa).

Substrate is bound by residues tyrosine 14 and glycine 41. Pyridoxal 5'-phosphate is bound by residues tyrosine 71, 104–105 (AK), tyrosine 128, asparagine 174, tyrosine 205, and 233–235 (SFS). The substrate site is built by lysine 105, tyrosine 128, and asparagine 174. Residue lysine 236 is modified to N6-(pyridoxal phosphate)lysine. 2 residues coordinate pyridoxal 5'-phosphate: arginine 244 and asparagine 275. Substrate-binding residues include asparagine 275 and arginine 368.

This sequence belongs to the class-I pyridoxal-phosphate-dependent aminotransferase family. LL-diaminopimelate aminotransferase subfamily. As to quaternary structure, homodimer. It depends on pyridoxal 5'-phosphate as a cofactor.

It catalyses the reaction (2S,6S)-2,6-diaminopimelate + 2-oxoglutarate = (S)-2,3,4,5-tetrahydrodipicolinate + L-glutamate + H2O + H(+). It functions in the pathway amino-acid biosynthesis; L-lysine biosynthesis via DAP pathway; LL-2,6-diaminopimelate from (S)-tetrahydrodipicolinate (aminotransferase route): step 1/1. Its function is as follows. Involved in the synthesis of meso-diaminopimelate (m-DAP or DL-DAP), required for both lysine and peptidoglycan biosynthesis. Catalyzes the direct conversion of tetrahydrodipicolinate to LL-diaminopimelate. The chain is LL-diaminopimelate aminotransferase from Chlamydia pneumoniae (Chlamydophila pneumoniae).